The sequence spans 174 residues: Small ribosomal subunit protein uS5 (174 aa).

One can recognise an S5 DRBM domain in the interval 18-81; sequence WQERVIQIRR…ADGKKHLIDI (64 aa).

Belongs to the universal ribosomal protein uS5 family. In terms of assembly, part of the 30S ribosomal subunit. Contacts proteins S4 and S8.

Functionally, with S4 and S12 plays an important role in translational accuracy. Its function is as follows. Located at the back of the 30S subunit body where it stabilizes the conformation of the head with respect to the body. The chain is Small ribosomal subunit protein uS5 from Trichormus variabilis (strain ATCC 29413 / PCC 7937) (Anabaena variabilis).